Reading from the N-terminus, the 281-residue chain is 2-dehydro-3-deoxyphosphooctonate aldolase (281 aa).

The protein belongs to the KdsA family.

It is found in the cytoplasm. It catalyses the reaction D-arabinose 5-phosphate + phosphoenolpyruvate + H2O = 3-deoxy-alpha-D-manno-2-octulosonate-8-phosphate + phosphate. It functions in the pathway carbohydrate biosynthesis; 3-deoxy-D-manno-octulosonate biosynthesis; 3-deoxy-D-manno-octulosonate from D-ribulose 5-phosphate: step 2/3. Its pathway is bacterial outer membrane biogenesis; lipopolysaccharide biosynthesis. This is 2-dehydro-3-deoxyphosphooctonate aldolase from Pseudomonas paraeruginosa (strain DSM 24068 / PA7) (Pseudomonas aeruginosa (strain PA7)).